A 383-amino-acid polypeptide reads, in one-letter code: Neuropeptide Y receptor type 1 (383 aa).

The Extracellular segment spans residues 1 to 44; sequence MNSTLSSQVENHSIYYNFSEKNSQFLAFENDDCHLPLAMIFTLA. 3 N-linked (GlcNAc...) asparagine glycosylation sites follow: N2, N11, and N17. Residues 45–65 traverse the membrane as a helical segment; the sequence is LAYGAVIILGVSGNLALIIII. At 66–76 the chain is on the cytoplasmic side; it reads LKQKEMRNVTN. Residues 77–97 traverse the membrane as a helical segment; it reads ILIVNLSFSDLLVAIMCLPFT. Topologically, residues 98–116 are extracellular; the sequence is FVYTLMDHWVFGEVMCKLN. C113 and C198 are oxidised to a cystine. A helical transmembrane segment spans residues 117–137; it reads PFVQCVSITVSIFSLVLIAVE. Topologically, residues 138–154 are cytoplasmic; the sequence is RHQLIINPRGWRPSNRH. The helical transmembrane segment at 155–175 threads the bilayer; that stretch reads AYVGIAVIWVLAVASSLPFLI. Over 176-211 the chain is Extracellular; it reads YQVLTDEPFQNVTLDAFKDKYVCFDKFLSDSHRLSY. A helical membrane pass occupies residues 212 to 232; that stretch reads TTLLLVLQYFGPLCFIFICYF. The Cytoplasmic segment spans residues 233–260; that stretch reads KIYIRLKRRNNMMDKMRDNKYRSSETKR. A helical membrane pass occupies residues 261 to 281; sequence INVMLLSIVVAFAVCWLPLTI. The Extracellular portion of the chain corresponds to 282-299; sequence FNTVFDWNHQIIATCNHN. A helical membrane pass occupies residues 300 to 320; it reads LLFLLCHLTAMISTCINPIFY. Residues 321–383 are Cytoplasmic-facing; that stretch reads GFLNKNFQRD…KIHSDDNEKI (63 aa). C338 carries S-palmitoyl cysteine lipidation. At S368 the chain carries Phosphoserine.

This sequence belongs to the G-protein coupled receptor 1 family.

Its subcellular location is the cell membrane. In terms of biological role, receptor for neuropeptide Y and peptide YY. This chain is Neuropeptide Y receptor type 1 (NPY1R), found in Sus scrofa (Pig).